We begin with the raw amino-acid sequence, 301 residues long: Aspartate carbamoyltransferase catalytic subunit (301 aa).

Carbamoyl phosphate is bound by residues arginine 46 and threonine 47. Lysine 74 serves as a coordination point for L-aspartate. The carbamoyl phosphate site is built by arginine 96, histidine 124, and glutamine 127. The L-aspartate site is built by arginine 157 and arginine 208. Alanine 249 and proline 250 together coordinate carbamoyl phosphate.

The protein belongs to the aspartate/ornithine carbamoyltransferase superfamily. ATCase family. As to quaternary structure, heterododecamer (2C3:3R2) of six catalytic PyrB chains organized as two trimers (C3), and six regulatory PyrI chains organized as three dimers (R2).

It catalyses the reaction carbamoyl phosphate + L-aspartate = N-carbamoyl-L-aspartate + phosphate + H(+). It functions in the pathway pyrimidine metabolism; UMP biosynthesis via de novo pathway; (S)-dihydroorotate from bicarbonate: step 2/3. Catalyzes the condensation of carbamoyl phosphate and aspartate to form carbamoyl aspartate and inorganic phosphate, the committed step in the de novo pyrimidine nucleotide biosynthesis pathway. This Bacillus cereus (strain ATCC 14579 / DSM 31 / CCUG 7414 / JCM 2152 / NBRC 15305 / NCIMB 9373 / NCTC 2599 / NRRL B-3711) protein is Aspartate carbamoyltransferase catalytic subunit.